Consider the following 139-residue polypeptide: ATP synthase epsilon chain (139 aa).

It belongs to the ATPase epsilon chain family. F-type ATPases have 2 components, CF(1) - the catalytic core - and CF(0) - the membrane proton channel. CF(1) has five subunits: alpha(3), beta(3), gamma(1), delta(1), epsilon(1). CF(0) has three main subunits: a, b and c.

The protein localises to the cell inner membrane. Produces ATP from ADP in the presence of a proton gradient across the membrane. In Salmonella arizonae (strain ATCC BAA-731 / CDC346-86 / RSK2980), this protein is ATP synthase epsilon chain.